The sequence spans 389 residues: Allantoicase (389 aa).

This sequence belongs to the allantoicase family.

It catalyses the reaction allantoate + H2O = (S)-ureidoglycolate + urea. It functions in the pathway nitrogen metabolism; (S)-allantoin degradation; (S)-ureidoglycolate from allantoate (aminidohydrolase route): step 1/1. Its function is as follows. Utilization of purines as secondary nitrogen sources, when primary sources are limiting. The polypeptide is Allantoicase (allc) (Xenopus tropicalis (Western clawed frog)).